The chain runs to 910 residues: Protein translocase subunit SecA (910 aa).

Residues Gln-87, 105–109, and Asp-508 contribute to the ATP site; that span reads GEGKT. Basic and acidic residues predominate over residues 558–568; that stretch reads RHESRRIDNQL. Disordered regions lie at residues 558–580 and 873–910; these read RHESRRIDNQLRGRSGRQGDPGS and AAQQGIAQVQRDEPKIGRNDPCPCGSGKKYKHCHGQLS. Residues Cys-894, Cys-896, Cys-905, and His-906 each coordinate Zn(2+). Positions 900-910 are enriched in basic residues; the sequence is KKYKHCHGQLS.

It belongs to the SecA family. In terms of assembly, monomer and homodimer. Part of the essential Sec protein translocation apparatus which comprises SecA, SecYEG and auxiliary proteins SecDF-YajC and YidC. Zn(2+) serves as cofactor.

The protein localises to the cell inner membrane. Its subcellular location is the cytoplasm. It catalyses the reaction ATP + H2O + cellular proteinSide 1 = ADP + phosphate + cellular proteinSide 2.. Its function is as follows. Part of the Sec protein translocase complex. Interacts with the SecYEG preprotein conducting channel. Has a central role in coupling the hydrolysis of ATP to the transfer of proteins into and across the cell membrane, serving both as a receptor for the preprotein-SecB complex and as an ATP-driven molecular motor driving the stepwise translocation of polypeptide chains across the membrane. This chain is Protein translocase subunit SecA, found in Stenotrophomonas maltophilia (strain R551-3).